Here is a 351-residue protein sequence, read N- to C-terminus: Homocitrate synthase (351 aa).

In terms of domain architecture, Pyruvate carboxyltransferase spans 23–272 (IKFCDTTLRD…KLPVDLDTTS (250 aa)).

This sequence belongs to the alpha-IPM synthase/homocitrate synthase family.

It catalyses the reaction acetyl-CoA + 2-oxoglutarate + H2O = (2R)-homocitrate + CoA + H(+). Functionally, this protein is a Fe-Mo-cofactor biosynthetic component. This is Homocitrate synthase (nifV) from Frankia alni.